A 145-amino-acid polypeptide reads, in one-letter code: Basic phospholipase A2 cPm08 (145 aa).

Residues 1 to 21 (MYPAHLLVLLAVCVSLLGASA) form the signal peptide. A propeptide spanning residues 22 to 27 (IPPLPL) is cleaved from the precursor. 7 cysteine pairs are disulfide-bonded: cysteine 38–cysteine 98, cysteine 54–cysteine 144, cysteine 56–cysteine 72, cysteine 71–cysteine 125, cysteine 78–cysteine 118, cysteine 87–cysteine 111, and cysteine 105–cysteine 116. Positions 55, 57, and 59 each coordinate Ca(2+). The active site involves histidine 75. A Ca(2+)-binding site is contributed by aspartate 76. Aspartate 119 is a catalytic residue.

The protein belongs to the phospholipase A2 family. Group I subfamily. D49 sub-subfamily. Ca(2+) serves as cofactor. In terms of tissue distribution, expressed by the venom gland.

Its subcellular location is the secreted. The catalysed reaction is a 1,2-diacyl-sn-glycero-3-phosphocholine + H2O = a 1-acyl-sn-glycero-3-phosphocholine + a fatty acid + H(+). Functionally, PLA2 catalyzes the calcium-dependent hydrolysis of the 2-acyl groups in 3-sn-phosphoglycerides. The sequence is that of Basic phospholipase A2 cPm08 from Laticauda semifasciata (Black-banded sea krait).